A 288-amino-acid polypeptide reads, in one-letter code: G1/S-specific cyclin-D2 (288 aa).

Residues Val26–Leu151 enclose the Cyclin N-terminal domain. The tract at residues Asp264–Leu288 is disordered. Phosphoserine is present on Ser270. Thr279 carries the phosphothreonine modification.

Belongs to the cyclin family. Cyclin D subfamily. In terms of assembly, interacts with either CDK4 or CDK6 protein kinase to form a serine/threonine kinase holoenzyme complex. The cyclin subunit imparts substrate specificity to the complex. Post-translationally, phosphorylation at Thr-279 by MAP kinases is required for ubiquitination and degradation by the DCX(AMBRA1) complex. Ubiquitinated by the DCX(AMBRA1) complex during the transition from G1 to S cell phase, leading to its degradation: ubiquitination is dependent on Thr-279 phosphorylation. The DCX(AMBRA1) complex represents the major regulator of CCND2 stability during the G1/S transition. Polyubiquitinated by the SCF(FBXL2) complex, leading to proteasomal degradation.

It is found in the nucleus. The protein resides in the cytoplasm. Its subcellular location is the nucleus membrane. Regulatory component of the cyclin D2-CDK4 (DC) complex that phosphorylates and inhibits members of the retinoblastoma (RB) protein family including RB1 and regulates the cell-cycle during G(1)/S transition. Phosphorylation of RB1 allows dissociation of the transcription factor E2F from the RB/E2F complex and the subsequent transcription of E2F target genes which are responsible for the progression through the G(1) phase. Hypophosphorylates RB1 in early G(1) phase. Cyclin D-CDK4 complexes are major integrators of various mitogenenic and antimitogenic signals. The polypeptide is G1/S-specific cyclin-D2 (CCND2) (Sus scrofa (Pig)).